The sequence spans 264 residues: Zinc import ATP-binding protein ZnuC (264 aa).

The ABC transporter domain occupies 11 to 226 (IELKGVNVTF…PVFIRFFGNQ (216 aa)). ATP is bound at residue 43–50 (GPNGGGKS).

Belongs to the ABC transporter superfamily. Zinc importer (TC 3.A.1.15.5) family. The complex is composed of two ATP-binding proteins (ZnuC), two transmembrane proteins (ZnuB) and a solute-binding protein (ZnuA).

It is found in the cell inner membrane. The catalysed reaction is Zn(2+)(out) + ATP(in) + H2O(in) = Zn(2+)(in) + ADP(in) + phosphate(in) + H(+)(in). Part of the ABC transporter complex ZnuABC involved in zinc import. Responsible for energy coupling to the transport system. The polypeptide is Zinc import ATP-binding protein ZnuC (Histophilus somni (strain 129Pt) (Haemophilus somnus)).